An 837-amino-acid polypeptide reads, in one-letter code: Striatin-interacting protein 1 (837 aa).

At Met1 the chain carries N-acetylmethionine. 2 disordered regions span residues 1–67 and 333–423; these read MEPA…ESPD and AASP…KGLP. Over residues 18 to 35 the composition is skewed to pro residues; it reads PQPPPPPPPATAQPPPGA. A compositionally biased stretch (low complexity) spans 36 to 46; the sequence is PRAAAGLLPGG. Residues 47–60 show a composition bias toward basic and acidic residues; the sequence is KAREFNRNQRKDSE. Residues Ser59, Ser335, and Ser339 each carry the phosphoserine modification. Over residues 333–343 the composition is skewed to low complexity; the sequence is AASPPASASDS. Positions 356-377 are enriched in basic and acidic residues; it reads KALIKQDNLDAFNERDPYKADD. Positions 378–391 are enriched in acidic residues; sequence SREEEEENDDDNSL. Ser788 is subject to Phosphoserine. The segment at 796–837 is required for STRIPAK core complex formation; it reads DNCLQSVLGQRVDLPEDFQMNYDLWLEREVFSKPISWEELLQ.

The protein belongs to the STRIP family. As to quaternary structure, part of the core of STRIPAK complexes composed of PP2A catalytic and scaffolding subunits, the striatins (PP2A regulatory subunits), the striatin-associated proteins MOB4, STRIP1 and STRIP2, PDCD10 and members of the STE20 kinases, such as STK24 and STK26. The STRIPAK complex can be extended by adapter proteins such as SLMAP:SIKE1, CTTNBP2 or CTTNBP2NL. Interacts with CDC42BPB. Interacts with CTTNBP2NL.

It localises to the cytoplasm. In terms of biological role, plays a role in the regulation of cell morphology and cytoskeletal organization. Required in the cortical actin filament dynamics and cell shape. Part of the striatin-interacting phosphatase and kinase (STRIPAK) complexes. STRIPAK complexes have critical roles in protein (de)phosphorylation and are regulators of multiple signaling pathways including Hippo, MAPK, nuclear receptor and cytoskeleton remodeling. Different types of STRIPAK complexes are involved in a variety of biological processes such as cell growth, differentiation, apoptosis, metabolism and immune regulation. This chain is Striatin-interacting protein 1 (STRIP1), found in Pongo abelii (Sumatran orangutan).